Consider the following 356-residue polypeptide: Glutamine synthetase cytosolic isozyme 1-4 (356 aa).

S2 carries the post-translational modification N-acetylserine. A phosphoserine mark is found at S2 and S48. Residues 19–99 (IIAEYIWIGG…VMCDAYTPAG (81 aa)) enclose the GS beta-grasp domain. A disordered region spans residues 37 to 66 (ARTLPGPVTDPSQLPKWNYDGSSTGQAPGD). Residues 106–356 (KRHAAAKIFE…IAESTILWKP (251 aa)) enclose the GS catalytic domain.

This sequence belongs to the glutamine synthetase family. As to quaternary structure, homooctamer. Interacts with GRF3. Expressed in the pericycle in the region of lateral root emergence.

The protein resides in the cytoplasm. The catalysed reaction is L-glutamate + NH4(+) + ATP = L-glutamine + ADP + phosphate + H(+). High-affinity glutamine synthetase. May contribute to the homeostatic control of glutamine synthesis in roots. This is Glutamine synthetase cytosolic isozyme 1-4 from Arabidopsis thaliana (Mouse-ear cress).